A 203-amino-acid polypeptide reads, in one-letter code: Thymidylate kinase (203 aa).

Gly14–Ser21 contributes to the ATP binding site.

Belongs to the thymidylate kinase family.

The catalysed reaction is dTMP + ATP = dTDP + ADP. Functionally, phosphorylation of dTMP to form dTDP in both de novo and salvage pathways of dTTP synthesis. The polypeptide is Thymidylate kinase (Rickettsia typhi (strain ATCC VR-144 / Wilmington)).